A 317-amino-acid chain; its full sequence is Melanocyte-stimulating hormone receptor (317 aa).

A compositionally biased stretch (polar residues) spans 1 to 20 (MPVQGSQRSLLGAVNSTPTA). The disordered stretch occupies residues 1-23 (MPVQGSQRSLLGAVNSTPTATPH). Residues 1–37 (MPVQGSQRSLLGAVNSTPTATPHLRPAANQTGPQCLE) are Extracellular-facing. Asn29 is a glycosylation site (N-linked (GlcNAc...) asparagine). Residues 38–63 (VSIPDGLFLCLGLVSLVENTLVVAAI) form a helical membrane-spanning segment. At 64-72 (AKNRNLHSP) the chain is on the cytoplasmic side. Residues 73–93 (MYCFICCLALSDLLVSVSSVL) form a helical membrane-spanning segment. Over 94–118 (ETAVLLLLGAGALAAQATVVQQLGN) the chain is Extracellular. The helical transmembrane segment at 119–140 (VIDVLLCSSMVSSLFFLGAIAM) threads the bilayer. The Cytoplasmic portion of the chain corresponds to 141–163 (DRYISIFYALRYHSIVTLARARR). A helical transmembrane segment spans residues 164-183 (AIAAIWAASILSSTLFIAYC). Topologically, residues 184 to 191 (DRTAALLC) are extracellular. The helical transmembrane segment at 192–211 (LVVFFLAMLVLMAVLYVHML) threads the bilayer. Over 212–240 (TQARQHAQGIARLHKRQRPVQQGWGLKGA) the chain is Cytoplasmic. Residues 241-266 (ATLTILLGVFFLCWGPFFLHLTLIAV) traverse the membrane as a helical segment. At 267–279 (CPQHPTCSCIFKN) the chain is on the extracellular side. The helical transmembrane segment at 280 to 300 (FRLFLALIVCNAIVDPLIYAF) threads the bilayer. Topologically, residues 301–317 (RSQELRKTLKEVLLFFW) are cytoplasmic.

The protein belongs to the G-protein coupled receptor 1 family. Interacts with MGRN1, but does not undergo MGRN1-mediated ubiquitination; this interaction competes with GNAS-binding and thus inhibits agonist-induced cAMP production. Interacts with OPN3; the interaction results in a decrease in MC1R-mediated cAMP signaling and ultimately a decrease in melanin production in melanocytes.

The protein localises to the cell membrane. Receptor for MSH (alpha, beta and gamma) and ACTH. The activity of this receptor is mediated by G proteins which activate adenylate cyclase. Mediates melanogenesis, the production of eumelanin (black/brown) and phaeomelanin (red/yellow), via regulation of cAMP signaling in melanocytes. The protein is Melanocyte-stimulating hormone receptor (MC1R) of Lemur catta (Ring-tailed lemur).